The primary structure comprises 198 residues: Ribonuclease HII (198 aa).

The region spanning 11–198 (TCIAGVDEVG…APVKRALGLA (188 aa)) is the RNase H type-2 domain. 3 residues coordinate a divalent metal cation: Asp-17, Glu-18, and Asp-109.

Belongs to the RNase HII family. Mn(2+) is required as a cofactor. Requires Mg(2+) as cofactor.

It is found in the cytoplasm. The enzyme catalyses Endonucleolytic cleavage to 5'-phosphomonoester.. In terms of biological role, endonuclease that specifically degrades the RNA of RNA-DNA hybrids. The protein is Ribonuclease HII of Pectobacterium carotovorum subsp. carotovorum (strain PC1).